The chain runs to 496 residues: Maturase K (496 aa).

Belongs to the intron maturase 2 family. MatK subfamily.

The protein localises to the plastid. Its subcellular location is the chloroplast. Usually encoded in the trnK tRNA gene intron. Probably assists in splicing its own and other chloroplast group II introns. The polypeptide is Maturase K (Paeonia officinalis (Common peony)).